The sequence spans 96 residues: Protein C4 (96 aa).

The N-myristoyl glycine; by host moiety is linked to residue Gly2. The tract at residues 66 to 96 (STDDLQGEDSRQPMTLTPRQLTQEVSRRLLM) is disordered. A compositionally biased stretch (polar residues) spans 77–89 (QPMTLTPRQLTQE).

Belongs to the geminiviridae protein AC4/C4 family.

The protein resides in the host cell membrane. In terms of biological role, pathogenicity determinant. May act as a suppressor of RNA-mediated gene silencing, also known as post-transcriptional gene silencing (PTGS), a mechanism of plant viral defense that limits the accumulation of viral RNAs. This is Protein C4 from Cynanchum acutum (Tomato).